The sequence spans 206 residues: 2,3-bisphosphoglycerate-dependent phosphoglycerate mutase (206 aa).

Residues 9–16, 22–23, R61, 88–91, K99, 115–116, and 159–160 each bind substrate; these read RHGQSEWN, TG, ERNY, RR, and GN. Residue H10 is the Tele-phosphohistidine intermediate of the active site. Residue E88 is the Proton donor/acceptor of the active site.

Belongs to the phosphoglycerate mutase family. BPG-dependent PGAM subfamily. As to quaternary structure, homodimer.

The enzyme catalyses (2R)-2-phosphoglycerate = (2R)-3-phosphoglycerate. Its pathway is carbohydrate degradation; glycolysis; pyruvate from D-glyceraldehyde 3-phosphate: step 3/5. Functionally, catalyzes the interconversion of 2-phosphoglycerate and 3-phosphoglycerate. This is 2,3-bisphosphoglycerate-dependent phosphoglycerate mutase from Bartonella henselae (strain ATCC 49882 / DSM 28221 / CCUG 30454 / Houston 1) (Rochalimaea henselae).